A 72-amino-acid polypeptide reads, in one-letter code: Protein RALF-like 11 (72 aa).

The signal sequence occupies residues 1 to 17; sequence MKAWLICLLVICAAVIA. Cystine bridges form between C34/C43 and C63/C69.

It belongs to the plant rapid alkalinization factor (RALF) family.

It is found in the secreted. Its function is as follows. Cell signaling peptide that may regulate plant stress, growth, and development. Mediates a rapid alkalinization of extracellular space by mediating a transient increase in the cytoplasmic Ca(2+) concentration leading to a calcium-dependent signaling events through a cell surface receptor and a concomitant activation of some intracellular mitogen-activated protein kinases. This Arabidopsis thaliana (Mouse-ear cress) protein is Protein RALF-like 11 (RALFL11).